Reading from the N-terminus, the 318-residue chain is Pyrimidine-specific ribonucleoside hydrolase RihA (318 aa).

Histidine 240 is an active-site residue.

This sequence belongs to the IUNH family. RihA subfamily.

Functionally, hydrolyzes cytidine or uridine to ribose and cytosine or uracil, respectively. The protein is Pyrimidine-specific ribonucleoside hydrolase RihA of Shewanella sp. (strain MR-4).